A 495-amino-acid polypeptide reads, in one-letter code: Muscle LIM protein Mlp84B (495 aa).

Positions 12–63 (CPRCGKSVYAAEERLAGGYVFHKNCFKCGMCNKSLDSTNCTEHERELYCKTC) constitute an LIM zinc-binding 1 domain. A Nuclear localization signal motif is present at residues 66–71 (RKFGPK). In terms of domain architecture, LIM zinc-binding 2 spans 120–172 (CPRCGGYVYAAEQMLARGRSWHKECFKCGTCKKGLDSILCCEAPDKNIYCKGC). The Nuclear localization signal signature appears at 175–180 (KKFGPK). LIM zinc-binding domains follow at residues 222–274 (CPRC…CRTC), 325–377 (CPRC…CRAC), and 421–473 (CPRC…CRAC).

In terms of tissue distribution, in the embryo, expression is restricted to the somatic, visceral, and pharyngeal muscles. Within the somatic musculature, expression is localized at the ends of muscles fibers at the point of attachment to the epidermis (at protein level). There is no expression in cardiac mesoderm or in fat body.

The protein localises to the cytoplasm. It is found in the nucleus. In terms of biological role, plays a role in cell differentiation late in myogenesis. Transcription factor Mef2 is essential for expression. The sequence is that of Muscle LIM protein Mlp84B from Drosophila melanogaster (Fruit fly).